The primary structure comprises 178 residues: Mediator of RNA polymerase II transcription subunit 28 (178 aa).

Positions 1–43 (MAASLGGMFAGQPPGPPPPPPGLPGQASLLQAAPGAPRPSNST) are disordered. Residues 13 to 23 (PPGPPPPPPGL) show a composition bias toward pro residues. The stretch at 109-145 (QVIKEDVSELRSELQRKDALVQKHLTKLRHWQQVLED) forms a coiled coil.

This sequence belongs to the Mediator complex subunit 28 family. In terms of assembly, forms a ternary complex with NF2/merlin and GRB2. Binds to actin. Component of the Mediator complex, which is probably composed of MED1, MED4, MED6, MED7, MED8, MED9, MED10, MED11, MED12, MED13, MED13L, MED14, MED15, MED16, MED17, MED18, MED19, MED20, MED21, MED22, MED23, MED24, MED25, MED26, MED27, MED29, MED30, MED31, CCNC, CDK8 and CDC2L6/CDK11. The MED12, MED13, CCNC and CDK8 subunits form a distinct module termed the CDK8 module. Mediator containing the CDK8 module is less active than Mediator lacking this module in supporting transcriptional activation. Individual preparations of the Mediator complex lacking one or more distinct subunits have been variously termed ARC, CRSP, DRIP, PC2, SMCC and TRAP.

Its subcellular location is the nucleus. It is found in the cytoplasm. The protein resides in the membrane. May be part of a complex containing NF2/merlin that participates in cellular signaling to the actin cytoskeleton downstream of tyrosine kinase signaling pathways. Component of the Mediator complex, a coactivator involved in the regulated transcription of nearly all RNA polymerase II-dependent genes. Mediator functions as a bridge to convey information from gene-specific regulatory proteins to the basal RNA polymerase II transcription machinery. Mediator is recruited to promoters by direct interactions with regulatory proteins and serves as a scaffold for the assembly of a functional preinitiation complex with RNA polymerase II and the general transcription factors. The sequence is that of Mediator of RNA polymerase II transcription subunit 28 (Med28) from Rattus norvegicus (Rat).